A 356-amino-acid chain; its full sequence is Deoxyribonuclease-2-beta (356 aa).

The N-terminal stretch at 1 to 22 (MTAQPLKAALPLLFVALSGVLG) is a signal peptide. N-linked (GlcNAc...) asparagine glycosylation is found at Asn-77, Asn-98, Asn-114, and Asn-273.

It belongs to the DNase II family. In terms of tissue distribution, liver specific.

The protein resides in the lysosome. It catalyses the reaction Endonucleolytic cleavage to nucleoside 3'-phosphates and 3'-phosphooligonucleotide end-products.. Its function is as follows. Hydrolyzes DNA under acidic conditions. Does not require divalent cations for activity. Participates in the degradation of nuclear DNA during lens cell differentiation. This Rattus norvegicus (Rat) protein is Deoxyribonuclease-2-beta (Dnase2b).